The chain runs to 602 residues: Translation initiation factor IF-2 (602 aa).

Residues 112-281 (KRAPIITIMG…LLLCEVLDLK (170 aa)) enclose the tr-type G domain. The G1 stretch occupies residues 121–128 (GHVDHGKT). 121–128 (GHVDHGKT) lines the GTP pocket. The segment at 146 to 150 (GITQH) is G2. Positions 167 to 170 (DTPG) are G3. Residues 167-171 (DTPGH) and 221-224 (NKMD) contribute to the GTP site. Residues 221-224 (NKMD) form a G4 region. Residues 257–259 (SAL) form a G5 region.

Belongs to the TRAFAC class translation factor GTPase superfamily. Classic translation factor GTPase family. IF-2 subfamily.

The protein localises to the cytoplasm. One of the essential components for the initiation of protein synthesis. Protects formylmethionyl-tRNA from spontaneous hydrolysis and promotes its binding to the 30S ribosomal subunits. Also involved in the hydrolysis of GTP during the formation of the 70S ribosomal complex. This chain is Translation initiation factor IF-2, found in Mycoplasmopsis synoviae (strain 53) (Mycoplasma synoviae).